We begin with the raw amino-acid sequence, 657 residues long: MNVRAKKKPQQREMASASSGPSRSLSKGGVSRRPPLARVRVAVRLRPFMDEAKEPPCVRGIDSCSLEVANWRKYQETLKYQFDAFYGEKSTQQDVYVGSVQPILRHLLEGQNASVLAYGPTGAGKTHTMLGSPEQPGVIPRALMDLLQLTREESAEGRPWDISVAMSYLEIYQEKVLDLLDPASGDLVIREDCRGNILIPGLTQKPITSFSEFEQHFLPASRNRVVGATRLNQRSSRSHAVLLVKVEQRERLTPFRQREGKLYLIDLAGSEDNRRTGNQGIRLKESGAINTSLFVLGKVVDALNQGLPRIPYRDSKLTRLLQDSLGGSAHSILIANIAPERRFYQDTISALNFTARSKEVINRPFTNESLQPHALAPVKLPQKELLGPSEAKKAKGPEEESTGSPESTAAPASASQKLSLLQKLSNMDPAMLENLLSMERLLGSQGSQGIPLLNTPKRERMVLIKTVEEKNLEIERLKMKQKELEAKVLAQEALDPKEKENTPTILQPSSSCSGSVAKPLKKAVVMPLQRIQKQSESSNKIHLLKKGHKRKLESSHESEAVEKDEDYWEIQISPELLARGRKKLLHLLNEGSARDLRSLQRIGQKKAQLIVGWRELHGPFNEVEDLEQVEGISGKQVESFLKANLLSLAASQHSGPS.

The tract at residues 1–33 (MNVRAKKKPQQREMASASSGPSRSLSKGGVSRR) is disordered. Positions 16–33 (SASSGPSRSLSKGGVSRR) are enriched in low complexity. Residues 38 to 360 (RVRVAVRLRP…LNFTARSKEV (323 aa)) form the Kinesin motor domain. 119 to 126 (GPTGAGKT) is an ATP binding site. Residues 388 to 415 (PSEAKKAKGPEEESTGSPESTAAPASAS) form a disordered region. The segment covering 402–415 (TGSPESTAAPASAS) has biased composition (low complexity). Residues S404, S419, and S444 each carry the phosphoserine modification. K457 is covalently cross-linked (Glycyl lysine isopeptide (Lys-Gly) (interchain with G-Cter in SUMO2)). Residues 457 to 502 (KRERMVLIKTVEEKNLEIERLKMKQKELEAKVLAQEALDPKEKENT) are a coiled coil. Residues S537, S554, and S573 each carry the phosphoserine modification.

This sequence belongs to the TRAFAC class myosin-kinesin ATPase superfamily. Kinesin family. As to quaternary structure, interacts with FAM83D and SIAH1. Post-translationally, ubiquitinated; mediated by SIAH1 and leading to its subsequent proteasomal degradation.

It localises to the nucleus. The protein resides in the cytoplasm. Its subcellular location is the cytoskeleton. In terms of biological role, kinesin family member that is involved in spindle formation and the movements of chromosomes during mitosis and meiosis. Binds to microtubules and to DNA. Plays a role in congression of laterally attached chromosomes in NDC80-depleted cells. The sequence is that of Kinesin-like protein KIF22 (Kif22) from Rattus norvegicus (Rat).